Here is a 679-residue protein sequence, read N- to C-terminus: Methionine--tRNA ligase (679 aa).

The 'HIGH' region signature appears at 14-24 (PYANGSIHLGH). C145, C148, C158, and C161 together coordinate Zn(2+). The 'KMSKS' region motif lies at 331–335 (KMSKS). K334 serves as a coordination point for ATP. The region spanning 577 to 679 (TFAAVDLRVA…SGAKPGQRIK (103 aa)) is the tRNA-binding domain.

It belongs to the class-I aminoacyl-tRNA synthetase family. MetG type 1 subfamily. In terms of assembly, homodimer. Zn(2+) serves as cofactor.

The protein localises to the cytoplasm. It carries out the reaction tRNA(Met) + L-methionine + ATP = L-methionyl-tRNA(Met) + AMP + diphosphate. Is required not only for elongation of protein synthesis but also for the initiation of all mRNA translation through initiator tRNA(fMet) aminoacylation. This Pseudomonas putida (strain ATCC 700007 / DSM 6899 / JCM 31910 / BCRC 17059 / LMG 24140 / F1) protein is Methionine--tRNA ligase.